The chain runs to 434 residues: UPF0597 protein CLB_1949 (434 aa).

The protein belongs to the UPF0597 family.

This Clostridium botulinum (strain ATCC 19397 / Type A) protein is UPF0597 protein CLB_1949.